Reading from the N-terminus, the 74-residue chain is uncharacterized protein (74 aa).

This is an uncharacterized protein from Homo sapiens (Human).